The primary structure comprises 301 residues: Cardiolipin synthase (CMP-forming) (301 aa).

The disordered stretch occupies residues 70–93; the sequence is SGAGKAAPRPAAGAGAAAEAPGGQ. Residues 71-93 are compositionally biased toward low complexity; sequence GAGKAAPRPAAGAGAAAEAPGGQ. The next 5 membrane-spanning stretches (helical) occupy residues 109 to 129, 133 to 153, 190 to 212, 250 to 270, and 272 to 292; these read IPNM…YLII, FNIA…DGFI, IPVP…VFYV, LILV…SIYL, and ILWC…YHYG.

The protein belongs to the CDP-alcohol phosphatidyltransferase class-I family. A divalent metal cation serves as cofactor. As to expression, highly expressed in tissues such as heart, skeletal muscle and liver.

It is found in the mitochondrion inner membrane. It catalyses the reaction a CDP-1,2-diacyl-sn-glycerol + a 1,2-diacyl-sn-glycero-3-phospho-(1'-sn-glycerol) = a cardiolipin + CMP + H(+). Catalyzes the synthesis of cardiolipin (CL) (diphosphatidylglycerol) by specifically transferring a phosphatidyl group from CDP-diacylglycerol to phosphatidylglycerol (PG). CL is a key phospholipid in mitochondrial membranes and plays important roles in maintaining the functional integrity and dynamics of mitochondria under both optimal and stress conditions. The chain is Cardiolipin synthase (CMP-forming) (CRLS1) from Homo sapiens (Human).